A 259-amino-acid polypeptide reads, in one-letter code: HTH-type transcriptional regulator Rv1931c (259 aa).

A compositionally biased stretch (basic residues) spans 104–121 (SHRRHRPRAGTGRRRPRH). Residues 104-170 (SHRRHRPRAG…GAGGHRGRAG (67 aa)) are disordered. An HTH araC/xylS-type domain is found at 174–257 (RIGELAQRAA…GISPDQYRKA (84 aa)). DNA-binding regions (H-T-H motif) lie at residues 176-197 (GELAQRAAMSPRHFTRVFSDEV) and 224-247 (VVAIAARCGFGTAETMRRSFIRRV).

In terms of biological role, controls the expression of genes important for virulence. The sequence is that of HTH-type transcriptional regulator Rv1931c from Mycobacterium tuberculosis (strain ATCC 25618 / H37Rv).